Consider the following 76-residue polypeptide: Conopeptide X11.1 (76 aa).

The N-terminal stretch at Met1 to Gly20 is a signal peptide. The propeptide occupies Glu21–Arg39. Disulfide bonds link Cys42–Cys56, Cys49–Cys61, Cys55–Cys66, and Cys60–Cys73.

As to expression, expressed by the venom duct.

Its subcellular location is the secreted. Its function is as follows. Antimicrobial peptide that potently inhibits growth of Mycobacterium tuberculosis (H37Rv strain) (MIC=3 uM). In Conasprella ximenes (Interrupted cone), this protein is Conopeptide X11.1.